A 538-amino-acid chain; its full sequence is Cytochrome P450 monooxygenase claM (538 aa).

A helical membrane pass occupies residues Leu36–Leu56. N-linked (GlcNAc...) asparagine glycans are attached at residues Asn306 and Asn425. Cys472 is a heme binding site.

This sequence belongs to the cytochrome P450 family. Heme is required as a cofactor.

The protein resides in the membrane. The catalysed reaction is 2 nataloe emodin + reduced [NADPH--hemoprotein reductase] + O2 = cladofulvin + oxidized [NADPH--hemoprotein reductase] + 2 H2O + H(+). The protein operates within pigment biosynthesis. Cytochrome P450 monooxygenase; part of the gene cluster that mediates the biosynthesis of the bianthraquinone cladofulvin, a conidial pigment not required for virulence but that plays a role in fitness and resistance to environmental stresses including UV light and low-temperature stress. The pathway begins with the synthesis of atrochrysone thioester by the polyketide synthase (PKS) claG. The atrochrysone carboxyl ACP thioesterase claF then breaks the thioester bond and releases the atrochrysone carboxylic acid from claG. This compound is decarboxylated by claH to yield emodin, which is further converted to chrysophanol hydroquinone by the reductase claC and the dehydratase claB. The cytochrome monooxygenase P450 claM then catalyzes the dimerization of nataloe-emodin to cladofulvin. The sequence is that of Cytochrome P450 monooxygenase claM from Passalora fulva (Tomato leaf mold).